A 217-amino-acid chain; its full sequence is Probable GTP-binding protein EngB (217 aa).

Positions 24–207 constitute an EngB-type G domain; it reads SQPEICFAGR…HELIESWLIP (184 aa). GTP contacts are provided by residues 32 to 39, 59 to 63, 81 to 84, 148 to 151, and 185 to 188; these read GRSNAGKS, GRTQH, DLPG, TKCD, and LFSA. S39 and T61 together coordinate Mg(2+).

This sequence belongs to the TRAFAC class TrmE-Era-EngA-EngB-Septin-like GTPase superfamily. EngB GTPase family. Requires Mg(2+) as cofactor.

Necessary for normal cell division and for the maintenance of normal septation. This chain is Probable GTP-binding protein EngB, found in Paraburkholderia phytofirmans (strain DSM 17436 / LMG 22146 / PsJN) (Burkholderia phytofirmans).